We begin with the raw amino-acid sequence, 185 residues long: Potassium-transporting ATPase KdpC subunit 2 (185 aa).

The chain crosses the membrane as a helical span at residues Leu-8–Ala-28.

It belongs to the KdpC family. In terms of assembly, the system is composed of three essential subunits: KdpA, KdpB and KdpC.

Its subcellular location is the cell membrane. It is found in the membrane raft. In terms of biological role, part of the high-affinity ATP-driven potassium transport (or Kdp) system, which catalyzes the hydrolysis of ATP coupled with the electrogenic transport of potassium into the cytoplasm. This subunit acts as a catalytic chaperone that increases the ATP-binding affinity of the ATP-hydrolyzing subunit KdpB by the formation of a transient KdpB/KdpC/ATP ternary complex. The protein is Potassium-transporting ATPase KdpC subunit 2 of Staphylococcus aureus (strain Mu50 / ATCC 700699).